The chain runs to 349 residues: Interferon regulatory factor 2 (349 aa).

The segment at residues 5–113 (RMRMRPWLEE…NAFRVYRMLP (109 aa)) is a DNA-binding region (IRF tryptophan pentad repeat). An N6-acetyllysine mark is found at K75 and K78. Residue K137 forms a Glycyl lysine isopeptide (Lys-Gly) (interchain with G-Cter in SUMO); alternate linkage. A Glycyl lysine isopeptide (Lys-Gly) (interchain with G-Cter in SUMO2); alternate cross-link involves residue K137. Residue K166 forms a Glycyl lysine isopeptide (Lys-Gly) (interchain with G-Cter in SUMO) linkage. S225 is subject to Phosphoserine. A compositionally biased stretch (polar residues) spans 230–239 (YAESETTDSV). Positions 230–253 (YAESETTDSVASDEENAEGRPHWR) are disordered. K260 is covalently cross-linked (Glycyl lysine isopeptide (Lys-Gly) (interchain with G-Cter in SUMO2)). Residue K293 forms a Glycyl lysine isopeptide (Lys-Gly) (interchain with G-Cter in SUMO) linkage. Positions 303–349 (SSWPPFTDLPLPAPVTPTPSSSRPDRETRASVIKKTSDITQARVKSC) are disordered.

The protein belongs to the IRF family. In terms of assembly, interacts with BRD7, IRF2BP1 and IRF2BP2. Interacts with CREBBP in growing cells; the interaction acetylates IRF2 and regulates IRF2-dependent H4 promoter activity. In terms of processing, acetylated by CBP/ p300 during cell-growth. Acetylation on Lys-75 is required for stimulation of H4 promoter activity. Post-translationally, the major sites of sumoylation are Lys-137 and Lys-293. Sumoylation with SUMO1 increases its transcriptional repressor activity on IRF1 and diminishes its ability to activate ISRE and H4 promoter.

The protein resides in the nucleus. Functionally, specifically binds to the upstream regulatory region of type I IFN and IFN-inducible MHC class I genes (the interferon consensus sequence (ICS)) and represses those genes. Also acts as an activator for several genes including H4 and IL7. Constitutively binds to the ISRE promoter to activate IL7. Involved in cell cycle regulation through binding the site II (HiNF-M) promoter region of H4 and activating transcription during cell growth. Antagonizes IRF1 transcriptional activation. This chain is Interferon regulatory factor 2 (Irf2), found in Mus musculus (Mouse).